We begin with the raw amino-acid sequence, 536 residues long: Arginine--tRNA ligase (536 aa).

A 'HIGH' region motif is present at residues 119-129; it reads ANPTGFLHIGH.

It belongs to the class-I aminoacyl-tRNA synthetase family. Monomer.

It is found in the cytoplasm. The catalysed reaction is tRNA(Arg) + L-arginine + ATP = L-arginyl-tRNA(Arg) + AMP + diphosphate. This chain is Arginine--tRNA ligase, found in Mycoplasma mobile (strain ATCC 43663 / 163K / NCTC 11711) (Mesomycoplasma mobile).